The following is a 906-amino-acid chain: MSAATERERLTNANPNARGKDNSGAAIRQRFLKFYETRGHAVLPSSSLVPEDPTVLLTIAGMLQFKPVFMGQRERAHERATTTQKCVRTNDIENVGVTARHHTFFEMLGNFSFGDYFKKDACQWAWELATGEFGLNPERVWVSVFREDDEAFAIWRDVVGVPESRIKRMDEKDNFWAAGPTGPCGPCSELYYDFYPERGLEGADLDDDSRFIEFYNLVFMELNRDADGGVTPLKNKNIDTGMGLERMAQILQGVPNNYETDLIMPIINKAASMAGIDYNACNDVQKQQLKVIGDHTRAVSYMISDGVFASNIGRGYIVRRLLRRVVRNGRLLGIKPEEGASAFTPAIAEVAISMSEGCDPQVAKNSARILAELEREELSFQKTLGRGEEMLAELIETAKKTKTGLSGKDAFTLYDTYGFPLDITADVATEAGITVDLEGFESAMAEQRSMSQAAHQTVDVTAGNALARVADELGAKSTFIGYESTSSDVSNVLAIVCGGESVEEAPEGAKVDIVLDVTPFYAESGGQVGDNGVLHTADGATLEVSDVQKAGGGRIIVHTATVTKGSIKKGSQVTANVDENSRRRAKSNHTATHLLQSALKKVLGEDVSQAGSLCGFDRLRFDFNSPKAPTEAQLLEVENLVNGWISQSAALTAEEMPIAAAKDKGATMMFGEKYGDVVRVVDVPGISMELCGGTHVSNTAEIGGFKILSEAGIASGIRRIEAVAGAGVVELLQQRDAVVKQLASALRVPPEEITGRVSSLQEDLRATQKLAESLRGELAVAKAGALVSQAREVGEAKVLVARLDGVDPAALKVAAENLAAQLGDGAAIVLGSANGANVGLVALFDDKVQKDGGLKAGQVLGAAAKKCGGGGGGKPGFAQAGGRDATQLDAALDEALTTVTAALSPK.

Over residues 1-10 the composition is skewed to basic and acidic residues; that stretch reads MSAATERERL. Residues 1 to 22 form a disordered region; sequence MSAATERERLTNANPNARGKDN. Residues His-589, His-593, Cys-691, and His-695 each contribute to the Zn(2+) site.

This sequence belongs to the class-II aminoacyl-tRNA synthetase family. In terms of assembly, monomer. The cofactor is Zn(2+).

The protein resides in the plastid. It is found in the chloroplast. The protein localises to the mitochondrion. It catalyses the reaction tRNA(Ala) + L-alanine + ATP = L-alanyl-tRNA(Ala) + AMP + diphosphate. Catalyzes the attachment of alanine to tRNA(Ala) in a two-step reaction: alanine is first activated by ATP to form Ala-AMP and then transferred to the acceptor end of tRNA(Ala). Also edits incorrectly charged tRNA(Ala) via its editing domain. The protein is Alanine--tRNA ligase, chloroplastic/mitochondrial of Ostreococcus lucimarinus (strain CCE9901).